Reading from the N-terminus, the 151-residue chain is Chaperonin GroEL (151 aa).

ATP is bound at residue 41-45 (DGTTT).

It belongs to the chaperonin (HSP60) family. Forms a cylinder of 14 subunits composed of two heptameric rings stacked back-to-back. Interacts with the co-chaperonin GroES.

The protein localises to the cytoplasm. It catalyses the reaction ATP + H2O + a folded polypeptide = ADP + phosphate + an unfolded polypeptide.. In terms of biological role, together with its co-chaperonin GroES, plays an essential role in assisting protein folding. The GroEL-GroES system forms a nano-cage that allows encapsulation of the non-native substrate proteins and provides a physical environment optimized to promote and accelerate protein folding. This is Chaperonin GroEL from Mycobacterium avium.